A 513-amino-acid polypeptide reads, in one-letter code: Na(+)/H(+) antiporter NhaB (513 aa).

Helical transmembrane passes span 23-43, 52-72, 97-117, 120-140, 144-164, 202-222, 238-258, 303-323, 348-368, 391-411, 447-467, and 475-495; these read LALI…PFVA, IFTL…LLAI, LLLM…LFIF, LLLS…AAAF, FLDA…FYGI, LMMH…VGEP, FFLR…LTCL, AIIG…VGLI, TESL…AVII, LFYI…VGTI, ATPN…APLI, and VWMA…CVEF.

Belongs to the NhaB Na(+)/H(+) (TC 2.A.34) antiporter family.

The protein resides in the cell inner membrane. The enzyme catalyses 2 Na(+)(in) + 3 H(+)(out) = 2 Na(+)(out) + 3 H(+)(in). In terms of biological role, na(+)/H(+) antiporter that extrudes sodium in exchange for external protons. The chain is Na(+)/H(+) antiporter NhaB from Escherichia coli O127:H6 (strain E2348/69 / EPEC).